A 626-amino-acid chain; its full sequence is MSNELDFRSVRLLKNDPVNLQKFSYTSEDEAWKTYLENPLTAATKAMMRVNGDDDSVAALSFLYDYYMGPKEKRILSSSTGGRNDQGKRYYHGMEYETDLTPLESPTHLMKFLTENVSGTPEYPDLLKKNNLMSLEGALPTPGKAAPLPAGPSKLEAGSVDSYLLPTTDMYDNGSLNSLFESIHGVPPTQRWQPDSTFKDDPQESMLFPDILKTSPEPPCPEDYPSLKSDFEYTLGSPKAIHIKSGESPMAYLNKGQFYPVTLRTPAGGKGLALSSNKVKSVVMVVFDNEKVPVEQLRFWKHWHSRQPTAKQRVIDVADCKENFNTVEHIEEVAYNALSFVWNVNEEAKVFIGVNCLSTDFSSQKGVKGVPLNLQIDTYDCGLGTERLVHRAVCQIKIFCDKGAERKMRDDERKQFRRKVKCPDSSNSGVKGCLLSGFRGNETTYLRPETDLETPPVLFIPNVHFSSLQRSGGAAPSAGPSSSNRLPLKRTCSPFTEEFEPLPSKQAKEGDLQRVLLYVRRETEEVFDALMLKTPDLKGLRNAISEKYGFPEENIYKVYKKCKRGETSLLHPRLSRHPPPDCLECSHPVTQVRNMGFGDGFWRQRDLDSNPSPTTVNSLHFTVNSE.

Positions 30 to 95 (EAWKTYLENP…QGKRYYHGME (66 aa)) are transcription activation. The 235-residue stretch at 226–460 (SLKSDFEYTL…DLETPPVLFI (235 aa)) folds into the Grh/CP2 DB domain.

Belongs to the grh/CP2 family. Grainyhead subfamily. Homodimer, also forms heterodimers with GRHL1 and GRHL2. Interacts with LMO4. Expressed in brain, colon, pancreas, placenta and kidney. Isoform 1 is expressed in lung and tonsil. Isoform 2 is prostate-specific.

The protein localises to the nucleus. In terms of biological role, transcription factor playing important roles in primary neurulation and in the differentiation of stratified epithelia of both ectodermal and endodermal origin. Binds directly to the consensus DNA sequence 5'-AACCGGTT-3' acting as an activator and repressor on distinct target genes. xhibits functional redundancy with GRHL2 in epidermal morphogenetic events and epidermal wound repair. Exhibits functional redundancy with GRHL2 in epidermal morphogenetic events and epidermal wound repair but is essential to form the epidermal barrier with TGM3 as critical direct target gene among others. Despite being dispensable during normal epidermal homeostasis in the adulthood, is again required for barrier repair after immune-mediated epidermal damage, regulates distinct gene batteries in embryonic epidermal differentiation and adult epidermal barrier reformation after injury. Plays unique and cooperative roles with GRHL2 in establishing distinct zones of primary neurulation. Essential for spinal closure, functions cooperatively with GRHL2 in closure 2 (forebrain/midbrain boundary) and posterior neuropore closure. Also required for proper development of the oral periderm. No genetic interaction with GRHL3, no functional cooperativity due to diverse target gene selectivity. The chain is Grainyhead-like protein 3 homolog from Homo sapiens (Human).